The primary structure comprises 59 residues: Protein SspF (59 aa).

It belongs to the alpha/beta-type SASP family.

Functionally, may play some important role in either sporulation or the dormant spore. The protein is Protein SspF (sspF) of Bacillus cereus (strain ATCC 14579 / DSM 31 / CCUG 7414 / JCM 2152 / NBRC 15305 / NCIMB 9373 / NCTC 2599 / NRRL B-3711).